We begin with the raw amino-acid sequence, 65 residues long: Putative antitoxin PF2058 (65 aa).

Belongs to the UPF0165 family.

Possibly the antitoxin component of a type II toxin-antitoxin (TA) system. In Pyrococcus furiosus (strain ATCC 43587 / DSM 3638 / JCM 8422 / Vc1), this protein is Putative antitoxin PF2058.